Here is a 266-residue protein sequence, read N- to C-terminus: Basic endochitinase C (266 aa).

Residues 1–23 (MRSLAVVVAVVATVAMAIGTAHG) form the signal peptide. 3 disulfides stabilise this stretch: C46/C108, C120/C128, and C246/C259. E90 (proton donor) is an active-site residue.

It belongs to the glycosyl hydrolase 19 family. Chitinase class II subfamily. In terms of tissue distribution, localized to the starchy endoderm of the seed May localize to other parts of the seed including the aleurone cells (at protein level).

It carries out the reaction Random endo-hydrolysis of N-acetyl-beta-D-glucosaminide (1-&gt;4)-beta-linkages in chitin and chitodextrins.. In terms of biological role, defense against chitin-containing fungal pathogens. Binds the hyphal tips of fungi and degrades nascent chitin. The sequence is that of Basic endochitinase C from Secale cereale (Rye).